Here is a 207-residue protein sequence, read N- to C-terminus: Ribosomal RNA small subunit methyltransferase G (207 aa).

S-adenosyl-L-methionine contacts are provided by residues glycine 73, leucine 78, 124 to 125 (VE), and arginine 139.

Belongs to the methyltransferase superfamily. RNA methyltransferase RsmG family.

The protein localises to the cytoplasm. The enzyme catalyses guanosine(527) in 16S rRNA + S-adenosyl-L-methionine = N(7)-methylguanosine(527) in 16S rRNA + S-adenosyl-L-homocysteine. In terms of biological role, specifically methylates the N7 position of guanine in position 527 of 16S rRNA. In Shigella flexneri, this protein is Ribosomal RNA small subunit methyltransferase G.